The sequence spans 88 residues: ATP synthase subunit 9, mitochondrial (88 aa).

Transmembrane regions (helical) follow at residues Ile-30–Val-50 and Leu-66–Leu-86.

It belongs to the ATPase C chain family. As to quaternary structure, F-type ATPases have 2 components, CF(1) - the catalytic core - and CF(0) - the membrane proton channel. CF(1) has five subunits: alpha(3), beta(3), gamma(1), delta(1), epsilon(1). CF(0) has three main subunits: a, b and c.

It localises to the mitochondrion membrane. Functionally, mitochondrial membrane ATP synthase (F(1)F(0) ATP synthase or Complex V) produces ATP from ADP in the presence of a proton gradient across the membrane which is generated by electron transport complexes of the respiratory chain. F-type ATPases consist of two structural domains, F(1) - containing the extramembraneous catalytic core and F(0) - containing the membrane proton channel, linked together by a central stalk and a peripheral stalk. During catalysis, ATP synthesis in the catalytic domain of F(1) is coupled via a rotary mechanism of the central stalk subunits to proton translocation. Part of the complex F(0) domain. A homomeric c-ring of probably 10 subunits is part of the complex rotary element. The chain is ATP synthase subunit 9, mitochondrial (atp9) from Dictyostelium citrinum (Slime mold).